The primary structure comprises 397 residues: MERFKKASSIIETLKQQGHEAYFVGGSVRDLIIDRPIGDIDIATSALPEEVMAIFPRNVPVGLEHGTVIVVENGEPYEVTTFRTESEYEDFRRPSSVQFVRSLEEDLKRRDFTMNAIAMTEEGKMVDLFAGQEAIQQREIVTVGNAADRFQEDALRMMRGIRFVSTLGFSLEMKTKQAIETYGHLLEHIAIERITVEFEKLLTGTYCVKGLKELVETKLFSHLPYLQMSEERLLKATQYKWDSFETDIEAWAFFLYCIGEEHPSVFLRQWKFSNKKIKDIVAVLLTIRTRKEKDWDTVLLYKTGIHIAEMAERVYEAMIERYDPTSVERVQSMFHALPIQERQEMNVTGNDLLNWANKKPGPWVAEMLQKIEEAIVQGNVVNEKERIREWLQGCNLL.

2 residues coordinate ATP: glycine 26 and arginine 29. Residues glycine 26 and arginine 29 each contribute to the CTP site. 2 residues coordinate Mg(2+): aspartate 39 and aspartate 41. Arginine 110, aspartate 153, arginine 156, arginine 159, and arginine 162 together coordinate ATP. CTP-binding residues include arginine 110, aspartate 153, arginine 156, arginine 159, and arginine 162.

It belongs to the tRNA nucleotidyltransferase/poly(A) polymerase family. Bacterial CCA-adding enzyme type 3 subfamily. In terms of assembly, homodimer. Mg(2+) serves as cofactor.

The catalysed reaction is a tRNA precursor + 2 CTP + ATP = a tRNA with a 3' CCA end + 3 diphosphate. It catalyses the reaction a tRNA with a 3' CCA end + 2 CTP + ATP = a tRNA with a 3' CCACCA end + 3 diphosphate. In terms of biological role, catalyzes the addition and repair of the essential 3'-terminal CCA sequence in tRNAs without using a nucleic acid template. Adds these three nucleotides in the order of C, C, and A to the tRNA nucleotide-73, using CTP and ATP as substrates and producing inorganic pyrophosphate. tRNA 3'-terminal CCA addition is required both for tRNA processing and repair. Also involved in tRNA surveillance by mediating tandem CCA addition to generate a CCACCA at the 3' terminus of unstable tRNAs. While stable tRNAs receive only 3'-terminal CCA, unstable tRNAs are marked with CCACCA and rapidly degraded. The polypeptide is CCA-adding enzyme (Bacillus cereus (strain B4264)).